A 146-amino-acid polypeptide reads, in one-letter code: Protein beta (146 aa).

The polypeptide is Protein beta (Adelaide River virus (ARV)).